The primary structure comprises 183 residues: Protein FAM180B (183 aa).

Residues 1–23 (MAATLQFLVCLVVAICLLSGVTT) form the signal peptide.

This sequence belongs to the FAM180 family.

It is found in the secreted. The chain is Protein FAM180B (FAM180B) from Homo sapiens (Human).